A 94-amino-acid polypeptide reads, in one-letter code: Pyrimidine/purine nucleoside phosphorylase (94 aa).

This sequence belongs to the nucleoside phosphorylase PpnP family.

It carries out the reaction a purine D-ribonucleoside + phosphate = a purine nucleobase + alpha-D-ribose 1-phosphate. The catalysed reaction is adenosine + phosphate = alpha-D-ribose 1-phosphate + adenine. The enzyme catalyses cytidine + phosphate = cytosine + alpha-D-ribose 1-phosphate. It catalyses the reaction guanosine + phosphate = alpha-D-ribose 1-phosphate + guanine. It carries out the reaction inosine + phosphate = alpha-D-ribose 1-phosphate + hypoxanthine. The catalysed reaction is thymidine + phosphate = 2-deoxy-alpha-D-ribose 1-phosphate + thymine. The enzyme catalyses uridine + phosphate = alpha-D-ribose 1-phosphate + uracil. It catalyses the reaction xanthosine + phosphate = alpha-D-ribose 1-phosphate + xanthine. Its function is as follows. Catalyzes the phosphorolysis of diverse nucleosides, yielding D-ribose 1-phosphate and the respective free bases. Can use uridine, adenosine, guanosine, cytidine, thymidine, inosine and xanthosine as substrates. Also catalyzes the reverse reactions. The chain is Pyrimidine/purine nucleoside phosphorylase from Pseudomonas entomophila (strain L48).